A 164-amino-acid chain; its full sequence is 6,7-dimethyl-8-ribityllumazine synthase (164 aa).

5-amino-6-(D-ribitylamino)uracil contacts are provided by residues phenylalanine 24, 62–64 (SFE), and 86–88 (AVI). 91–92 (QT) is a binding site for (2S)-2-hydroxy-3-oxobutyl phosphate. The active-site Proton donor is histidine 94. Phenylalanine 119 contributes to the 5-amino-6-(D-ribitylamino)uracil binding site. Arginine 133 provides a ligand contact to (2S)-2-hydroxy-3-oxobutyl phosphate.

The protein belongs to the DMRL synthase family.

It carries out the reaction (2S)-2-hydroxy-3-oxobutyl phosphate + 5-amino-6-(D-ribitylamino)uracil = 6,7-dimethyl-8-(1-D-ribityl)lumazine + phosphate + 2 H2O + H(+). Its pathway is cofactor biosynthesis; riboflavin biosynthesis; riboflavin from 2-hydroxy-3-oxobutyl phosphate and 5-amino-6-(D-ribitylamino)uracil: step 1/2. Catalyzes the formation of 6,7-dimethyl-8-ribityllumazine by condensation of 5-amino-6-(D-ribitylamino)uracil with 3,4-dihydroxy-2-butanone 4-phosphate. This is the penultimate step in the biosynthesis of riboflavin. The polypeptide is 6,7-dimethyl-8-ribityllumazine synthase (Synechocystis sp. (strain ATCC 27184 / PCC 6803 / Kazusa)).